Here is a 125-residue protein sequence, read N- to C-terminus: Large ribosomal subunit protein eL31 (125 aa).

Position 1 is an N-acetylmethionine (Met-1). Ser-15 is subject to Phosphoserine. 2 positions are modified to N6-succinyllysine: Lys-55 and Lys-70. Lys-75 is subject to N6-acetyllysine; alternate. Residue Lys-75 is modified to N6-succinyllysine; alternate. At Ser-98 the chain carries Phosphoserine.

Belongs to the eukaryotic ribosomal protein eL31 family. Component of the large ribosomal subunit.

The protein localises to the cytoplasm. Component of the large ribosomal subunit. The ribosome is a large ribonucleoprotein complex responsible for the synthesis of proteins in the cell. The polypeptide is Large ribosomal subunit protein eL31 (RPL31) (Oryctolagus cuniculus (Rabbit)).